Consider the following 72-residue polypeptide: Potassium channel toxin kappa-KTx 5.1 (72 aa).

The signal sequence occupies residues 1 to 23 (MKLLPLLFVILIVCAILPDEASC). A propeptide spanning residues 24 to 43 (DQSELERKEENFKDESREIV) is cleaved from the precursor. 2 disulfides stabilise this stretch: C47-C64 and C51-C60. H70 is modified (histidine amide).

Belongs to the short scorpion toxin superfamily. Potassium channel inhibitor kappa-KTx family. Kappa-KTx 5 subfamily. As to expression, expressed by the venom gland.

The protein resides in the secreted. Its function is as follows. Weak blocker of potassium channels Kv1.1/KCNA1 (IC(50)=578.5 nM-9.9 uM) and Kv1.6/KCNA6 (~60% block at 30 uM of toxin). Acts by binding to the pore and occluding it. Has a voltage-dependent mode of action, which can be explained by a high content of basic residues causing repulsions at higher membrane voltages. Shows a weak interaction with muscle-type nicotinic acetylcholine receptors (nAChR), since it inhibits alpha-bungarotoxin binding to muscle-type nAChR from T.californica (IC(50)=1.4 uM). This suggests it probably weakly inhibits muscle nAChR. The mode of binding to potassium channels of this toxin differs from its homologs (including HefuTx1), since it lacks the key aromatic residue of the functional dyad. In contrast, its functionally important site is composed of a number of basic residues. The chain is Potassium channel toxin kappa-KTx 5.1 from Heterometrus laoticus (Thai giant scorpion).